The chain runs to 389 residues: 8-amino-7-oxononanoate synthase (389 aa).

Arginine 31 is a substrate binding site. 109 to 110 (GY) provides a ligand contact to pyridoxal 5'-phosphate. Histidine 134 serves as a coordination point for substrate. Pyridoxal 5'-phosphate contacts are provided by residues serine 180, 205-208 (DEAH), and 236-239 (TLSK). At lysine 239 the chain carries N6-(pyridoxal phosphate)lysine. Substrate is bound at residue threonine 349.

This sequence belongs to the class-II pyridoxal-phosphate-dependent aminotransferase family. BioF subfamily. Homodimer. Pyridoxal 5'-phosphate serves as cofactor.

It catalyses the reaction 6-carboxyhexanoyl-[ACP] + L-alanine + H(+) = (8S)-8-amino-7-oxononanoate + holo-[ACP] + CO2. Its pathway is cofactor biosynthesis; biotin biosynthesis. In terms of biological role, catalyzes the decarboxylative condensation of pimeloyl-[acyl-carrier protein] and L-alanine to produce 8-amino-7-oxononanoate (AON), [acyl-carrier protein], and carbon dioxide. The sequence is that of 8-amino-7-oxononanoate synthase from Mycobacterium ulcerans (strain Agy99).